The chain runs to 366 residues: Putative transcription factor PHD1 (366 aa).

Residues 186 to 292 (RVITTMWEDE…KDIESIVDAR (107 aa)) form the HTH APSES-type domain. Positions 220 to 241 (GTKLLNVTKMTRGRRDGILRSE) form a DNA-binding region, H-T-H motif. The interval 294 to 366 (PSNKASLTPK…QTSRAKNELS (73 aa)) is disordered. Over residues 312 to 328 (EPSDNKHEIATEIKPKS) the composition is skewed to basic and acidic residues.

It belongs to the EFG1/PHD1/stuA family.

The protein resides in the nucleus. Functionally, putative transcription factor that functions in pseudohyphal growth. The protein is Putative transcription factor PHD1 (PHD1) of Saccharomyces cerevisiae (strain ATCC 204508 / S288c) (Baker's yeast).